The sequence spans 320 residues: Protoheme IX farnesyltransferase (320 aa).

A disordered region spans residues M1–A24. 8 consecutive transmembrane segments (helical) span residues A33–V55, L68–L88, N117–T137, L140–L160, W183–F203, I241–G261, M262–H282, and F300–I320.

Belongs to the UbiA prenyltransferase family. Protoheme IX farnesyltransferase subfamily.

It is found in the cell membrane. It catalyses the reaction heme b + (2E,6E)-farnesyl diphosphate + H2O = Fe(II)-heme o + diphosphate. Its pathway is porphyrin-containing compound metabolism; heme O biosynthesis; heme O from protoheme: step 1/1. In terms of biological role, converts heme B (protoheme IX) to heme O by substitution of the vinyl group on carbon 2 of heme B porphyrin ring with a hydroxyethyl farnesyl side group. This chain is Protoheme IX farnesyltransferase, found in Salinispora tropica (strain ATCC BAA-916 / DSM 44818 / JCM 13857 / NBRC 105044 / CNB-440).